We begin with the raw amino-acid sequence, 156 residues long: Ribosomal RNA large subunit methyltransferase H (156 aa).

S-adenosyl-L-methionine contacts are provided by residues Leu73, Gly104, and 123–128 (LSSLTL).

This sequence belongs to the RNA methyltransferase RlmH family. As to quaternary structure, homodimer.

The protein localises to the cytoplasm. The enzyme catalyses pseudouridine(1915) in 23S rRNA + S-adenosyl-L-methionine = N(3)-methylpseudouridine(1915) in 23S rRNA + S-adenosyl-L-homocysteine + H(+). Specifically methylates the pseudouridine at position 1915 (m3Psi1915) in 23S rRNA. The chain is Ribosomal RNA large subunit methyltransferase H from Neisseria gonorrhoeae (strain ATCC 700825 / FA 1090).